Reading from the N-terminus, the 438-residue chain is MGNNVVVLGTQWGDEGKGKIVDLLTEDAKYVVRYQGGHNAGHTLVIDGEKTVLHLIPSGILRDNVECIIGNGVVLSPDALLKEMAPLEARGIPVRERLFISEACPLILPYHVALDQAREIARGNKAIGTTGRGIGPAYEDKVSRRGLRVGDLFDKVAFAEKLKEVMEFHNFALVNYYKVEPVSYEEVLEQAMSYADLLTSMVIDVTDTLDAARKRGDKIMFEGAQGTLLDIDHGTYPYVTSSNTTAGGVAAGSGFGPRHLGYILGITKAYCTRVGSGPFPTELYDGLEKQDPIGKHLGTVGHEFGATTGRLRRTGWFDAVAMRRAIQINSLSGMCLTKLDVLDGLEELKICTGYQMKDGSLLEVSPMAAEAFEEATPVYETMPGWSENTFGAKTLEELPQAALNYIKRIEDLTGVPIDIISTGPDRNETIIKVHPFQA.

GTP contacts are provided by residues 13–19 and 41–43; these read GDEGKGK and GHT. Asp-14 (proton acceptor) is an active-site residue. Mg(2+)-binding residues include Asp-14 and Gly-41. IMP-binding positions include 14–17, 39–42, Thr-130, Arg-144, Gln-225, Thr-240, and Arg-310; these read DEGK and NAGH. The active-site Proton donor is the His-42. A substrate-binding site is contributed by 306 to 312; it reads ATTGRLR. Residues Arg-312, 338–340, and 421–423 each bind GTP; these read KLD and STG.

This sequence belongs to the adenylosuccinate synthetase family. Homodimer. Mg(2+) is required as a cofactor.

It is found in the cytoplasm. It carries out the reaction IMP + L-aspartate + GTP = N(6)-(1,2-dicarboxyethyl)-AMP + GDP + phosphate + 2 H(+). It functions in the pathway purine metabolism; AMP biosynthesis via de novo pathway; AMP from IMP: step 1/2. Plays an important role in the de novo pathway of purine nucleotide biosynthesis. Catalyzes the first committed step in the biosynthesis of AMP from IMP. This Aliivibrio fischeri (strain ATCC 700601 / ES114) (Vibrio fischeri) protein is Adenylosuccinate synthetase.